We begin with the raw amino-acid sequence, 231 residues long: 2-phospho-L-lactate guanylyltransferase (231 aa).

The protein belongs to the CofC family. Homodimer.

The enzyme catalyses (2S)-2-phospholactate + GTP + H(+) = (2S)-lactyl-2-diphospho-5'-guanosine + diphosphate. The protein operates within cofactor biosynthesis; coenzyme F420 biosynthesis. Guanylyltransferase that catalyzes the activation of (2S)-2-phospholactate (2-PL) as (2S)-lactyl-2-diphospho-5'-guanosine, via the condensation of 2-PL with GTP. It is involved in the biosynthesis of coenzyme F420, a hydride carrier cofactor. This Haloterrigena turkmenica (strain ATCC 51198 / DSM 5511 / JCM 9101 / NCIMB 13204 / VKM B-1734 / 4k) (Halococcus turkmenicus) protein is 2-phospho-L-lactate guanylyltransferase.